Consider the following 151-residue polypeptide: Phosphopantetheine adenylyltransferase (151 aa).

Ser9 contacts substrate. ATP-binding positions include 9-10 (SF) and His17. Positions 41, 73, and 87 each coordinate substrate. ATP-binding positions include 88 to 90 (GLR), Glu98, and 122 to 128 (KAHISST).

It belongs to the bacterial CoaD family. In terms of assembly, homohexamer. Requires Mg(2+) as cofactor.

The protein resides in the cytoplasm. It carries out the reaction (R)-4'-phosphopantetheine + ATP + H(+) = 3'-dephospho-CoA + diphosphate. Its pathway is cofactor biosynthesis; coenzyme A biosynthesis; CoA from (R)-pantothenate: step 4/5. Its function is as follows. Reversibly transfers an adenylyl group from ATP to 4'-phosphopantetheine, yielding dephospho-CoA (dPCoA) and pyrophosphate. This Christiangramia forsetii (strain DSM 17595 / CGMCC 1.15422 / KT0803) (Gramella forsetii) protein is Phosphopantetheine adenylyltransferase.